A 1178-amino-acid polypeptide reads, in one-letter code: DNA-directed RNA polymerase subunit beta' (1178 aa).

4 residues coordinate Zn(2+): C60, C62, C75, and C78. Mg(2+)-binding residues include D450, D452, and D454. C795, C869, C876, and C879 together coordinate Zn(2+).

Belongs to the RNA polymerase beta' chain family. As to quaternary structure, the RNAP catalytic core consists of 2 alpha, 1 beta, 1 beta' and 1 omega subunit. When a sigma factor is associated with the core the holoenzyme is formed, which can initiate transcription. The cofactor is Mg(2+). It depends on Zn(2+) as a cofactor.

The catalysed reaction is RNA(n) + a ribonucleoside 5'-triphosphate = RNA(n+1) + diphosphate. DNA-dependent RNA polymerase catalyzes the transcription of DNA into RNA using the four ribonucleoside triphosphates as substrates. This is DNA-directed RNA polymerase subunit beta' from Clostridium beijerinckii (strain ATCC 51743 / NCIMB 8052) (Clostridium acetobutylicum).